A 377-amino-acid polypeptide reads, in one-letter code: Dihydroorotate dehydrogenase (quinone) (377 aa).

FMN-binding positions include 68–72 (AGFDK) and Thr-92. Lys-72 contacts substrate. 117-121 (NRMGF) provides a ligand contact to substrate. FMN contacts are provided by Asn-149 and Asn-182. Position 182 (Asn-182) interacts with substrate. The Nucleophile role is filled by Ser-185. Residue Asn-187 coordinates substrate. The FMN site is built by Lys-224 and Thr-252. Residue 253-254 (NT) participates in substrate binding. Residues Gly-278, Gly-307, and 328–329 (YT) contribute to the FMN site.

The protein belongs to the dihydroorotate dehydrogenase family. Type 2 subfamily. In terms of assembly, monomer. The cofactor is FMN.

Its subcellular location is the cell membrane. The enzyme catalyses (S)-dihydroorotate + a quinone = orotate + a quinol. It functions in the pathway pyrimidine metabolism; UMP biosynthesis via de novo pathway; orotate from (S)-dihydroorotate (quinone route): step 1/1. Catalyzes the conversion of dihydroorotate to orotate with quinone as electron acceptor. This chain is Dihydroorotate dehydrogenase (quinone), found in Thermobifida fusca (strain YX).